The sequence spans 182 residues: Large ribosomal subunit protein uL6 (182 aa).

This sequence belongs to the universal ribosomal protein uL6 family. As to quaternary structure, part of the 50S ribosomal subunit.

This protein binds to the 23S rRNA, and is important in its secondary structure. It is located near the subunit interface in the base of the L7/L12 stalk, and near the tRNA binding site of the peptidyltransferase center. The sequence is that of Large ribosomal subunit protein uL6 from Methanococcus vannielii.